We begin with the raw amino-acid sequence, 140 residues long: Ribosome maturation factor RimP (140 aa).

Belongs to the RimP family.

It localises to the cytoplasm. Functionally, required for maturation of 30S ribosomal subunits. In Campylobacter fetus subsp. fetus (strain 82-40), this protein is Ribosome maturation factor RimP.